A 488-amino-acid chain; its full sequence is Palmitoleoyl-protein carboxylesterase notum1' (488 aa).

The first 19 residues, 1–19, serve as a signal peptide directing secretion; sequence MAGTLCVTLLLLLSTIAVG. Asn-90 carries N-linked (GlcNAc...) asparagine glycosylation. Active-site charge relay system residues include Ser-226, Asp-334, and His-383.

It belongs to the pectinacetylesterase family. Notum subfamily. As to expression, expressed in the egg and through cleavage to gastrulation stages. Enriched in the animal (prospective ectoderm) and dorsal regions in early gastrula. Shows a dynamic expression during embryogenesis, in particular during neural induction and antero-posterior (AP) patterning.

Its subcellular location is the secreted. It carries out the reaction [Wnt protein]-O-(9Z)-hexadecenoyl-L-serine + H2O = [Wnt protein]-L-serine + (9Z)-hexadecenoate + H(+). Functionally, carboxylesterase that acts as a key negative regulator of the Wnt signaling pathway by specifically mediating depalmitoleoylation of WNT proteins. Serine palmitoleoylation of WNT proteins is required for efficient binding to frizzled receptors. Functions in the prospective ectoderm and is required for neural induction. The protein is Palmitoleoyl-protein carboxylesterase notum1' of Xenopus laevis (African clawed frog).